A 429-amino-acid chain; its full sequence is Serine carboxypeptidase-like (429 aa).

Disulfide bonds link Cys58–Cys298, Cys226–Cys241, and Cys264–Cys269. N-linked (GlcNAc...) asparagine glycosylation is present at Asn76. Residue Ser148 is part of the active site. Asp336 is an active-site residue. Cys339 is a binding site for substrate. The active site involves His393. N-linked (GlcNAc...) asparagine glycans are attached at residues Asn414 and Asn417.

The protein belongs to the peptidase S10 family. As to expression, abundant in germinated embryos composed of leaf, root, and scutellum.

This Oryza sativa subsp. japonica (Rice) protein is Serine carboxypeptidase-like (CBP31).